Consider the following 2454-residue polypeptide: Probable serine/threonine-protein kinase DDB_G0277071 (2454 aa).

Low complexity predominate over residues 31–51 (TSSLTTTTTTTTTTTTTTSTT). Disordered regions lie at residues 31–57 (TSSL…HESN), 206–265 (QQQL…QKQN), 340–612 (PRPP…LKIE), 963–1051 (NNIN…NENE), 1201–1330 (SSDD…SNPL), and 1342–1528 (ISKG…SNNT). A coiled-coil region spans residues 259-307 (KQQQKQNSQQQQQQQQQQQQQQQQQQQQQQQQQQQQQQQQQQQKLNIHE). Low complexity-rich tracts occupy residues 346–399 (QQHQ…NITP) and 406–428 (PSSV…KPTS). Positions 429 to 444 (IGQIQSLHYHNPSLYQ) are enriched in polar residues. Low complexity-rich tracts occupy residues 450-461 (NRNRGNNNNNNN) and 475-536 (SSTV…NTPN). The span at 553–568 (GGIGGGGGGGSGGGGI) shows a compositional bias: gly residues. Composition is skewed to low complexity over residues 963 to 1048 (NNIN…TTTN), 1201 to 1248 (SSDD…TGGP), 1275 to 1284 (NSSNNNNTSS), 1299 to 1324 (SGSS…PTTG), and 1346 to 1403 (SPAS…SVST). Polar residues predominate over residues 1417 to 1441 (LNLSSVSKTGQASTSTPNLLNLKNI). Over residues 1442–1478 (PTTTNNSNSTTTTTTTTPTGKPQFSLNLSSLSKSSSS) the composition is skewed to low complexity. Residues 1479–1491 (TETVPPSQPNQPI) show a composition bias toward polar residues. Residues 1509–1528 (STTTTTTTTTPPPINNSNNT) are compositionally biased toward low complexity. The 305-residue stretch at 1730 to 2034 (FKDLKRVAKG…TKFIAIKPTI (305 aa)) folds into the Protein kinase domain. ATP is bound by residues 1736–1744 (VAKGAYGTV) and K1760. D1858 functions as the Proton acceptor in the catalytic mechanism. The Tyrosine-protein phosphatase domain maps to 2130–2271 (RPSKVASFMY…LCRWGKQRRN (142 aa)). The tract at residues 2379 to 2404 (NINNNNNNNSNNSKSKQQQQQQQNQN) is disordered.

The protein belongs to the protein kinase superfamily. Ser/Thr protein kinase family.

It catalyses the reaction L-seryl-[protein] + ATP = O-phospho-L-seryl-[protein] + ADP + H(+). The catalysed reaction is L-threonyl-[protein] + ATP = O-phospho-L-threonyl-[protein] + ADP + H(+). The chain is Probable serine/threonine-protein kinase DDB_G0277071 from Dictyostelium discoideum (Social amoeba).